A 784-amino-acid polypeptide reads, in one-letter code: MQRLMMLLATSGACLGLLAVAAVAAAGANPAQRDTHSLLPTHRRQKRDWIWNQMHIDEEKNTSLPHHVGKIKSSVSRKNAKYLLKGEYVGKVFRVDAETGDVFAIERLDRENISEYHLTAVIVDKDTGENLETPSSFTIKVHDVNDNWPVFTHRLFNASVPESSAVGTSVISVTAVDADDPTVGDHASVMYQILKGKEYFAIDNSGRIITITKSLDREKQARYEIVVEARDAQGLRGDSGTATVLVTLQDINDNFPFFTQTKYTFVVPEDTRVGTSVGSLFVEDPDEPQNRMTKYSILRGDYQDAFTIETNPAHNEGIIKPMKPLDYEYIQQYSFIVEATDPTIDLRYMSPPAGNRAQVIINITDVDEPPIFQQPFYHFQLKENQKKPLIGTVLAMDPDAARHSIGYSIRRTSDKGQFFRVTKKGDIYNEKELDREVYPWYNLTVEAKELDSTGTPTGKESIVQVHIEVLDENDNAPEFAKPYQPKVCENAVHGQLVLQISAIDKDITPRNVKFKFILNTENNFTLTDNHDNTANITVKYGQFDREHTKVHFLPVVISDNGMPSRTGTSTLTVAVCKCNEQGEFTFCEDMAAQVGVSIQAVVAILLCILTITVITLLIFLRRRLRKQARAHGKSVPEIHEQLVTYDEEGGGEMDTTSYDVSVLNSVRRGGAKPPRPALDARPSLYAQVQKPPRHAPGAHGGPGEMAAMIEVKKDEADHDGDGPPYDTLHIYGYEGSESIAESLSSLGTDSSDSDVDYDFLNDWGPRFKMLAELYGSDPREELLY.

The N-terminal stretch at 1-25 is a signal peptide; sequence MQRLMMLLATSGACLGLLAVAAVAA. The propeptide occupies 26-47; that stretch reads AGANPAQRDTHSLLPTHRRQKR. Cadherin domains are found at residues 48–151, 152–258, 259–372, 373–477, and 478–593; these read DWIW…WPVF, THRL…FPFF, TQTK…PPIF, QQPF…DNAP, and EFAK…MAAQ. Residues 48 to 599 are Extracellular-facing; it reads DWIWNQMHID…MAAQVGVSIQ (552 aa). Positions 58 and 59 each coordinate Ca(2+). N61 carries an N-linked (GlcNAc...) (complex) asparagine glycan. The Ca(2+) site is built by D109 and E111. N112 carries an N-linked (GlcNAc...) (complex) asparagine glycan. Residues D143, V144, N145, D146, and N147 each coordinate Ca(2+). N157 carries an N-linked (GlcNAc...) asparagine glycan. Ca(2+) is bound by residues D177, D179, H186, and D231. A glycan (N-linked (GlcNAc...) asparagine) is linked at N362. A glycan (N-linked (GlcNAc...) (complex) asparagine) is linked at N442. N-linked (GlcNAc...) asparagine glycans are attached at residues N523 and N535. The chain crosses the membrane as a helical span at residues 600 to 620; the sequence is AVVAILLCILTITVITLLIFL. The interval 621–660 is required for interaction with PALS1; that stretch reads RRRLRKQARAHGKSVPEIHEQLVTYDEEGGGEMDTTSYDV. At 621–784 the chain is on the cytoplasmic side; sequence RRRLRKQARA…GSDPREELLY (164 aa).

As to quaternary structure, part of a complex composed of AMOTL2, MAGI1 and CDH5, within the complex AMOTL2 acts as a scaffold protein for the interaction of MAGI1 with CDH5. The complex is required for coupling actin fibers to cell junctions in endothelial cells. Within the complex AMOTL2 (via its N-terminus) interacts with CDH5. Interacts (via cadherin 5 domain) with PTPRB. Interacts with TRPC4. Interacts with KRIT1. Interacts with PARD3. Interacts with RTN4 (isoform B). Interacts with PALS1; the interaction promotes PALS1 localization to cell junctions and is required for CDH5-mediated vascular lumen formation and endothelial cell. Interacts with CTNND1/p120-catenin; the interaction controls CADH5 endocytosis. Post-translationally, phosphorylated on tyrosine residues by KDR/VEGFR-2. Dephosphorylated by PTPRB. O-glycosylated. As to expression, expressed in endothelial cells (at protein level). Expressed in the brain.

The protein resides in the cell junction. Its subcellular location is the adherens junction. The protein localises to the cell membrane. It is found in the cytoplasm. Its function is as follows. Cadherins are calcium-dependent cell adhesion proteins. They preferentially interact with themselves in a homophilic manner in connecting cells; cadherins may thus contribute to the sorting of heterogeneous cell types. This cadherin may play a important role in endothelial cell biology through control of the cohesion and organization of the intercellular junctions. It associates with alpha-catenin forming a link to the cytoskeleton. Plays a role in coupling actin fibers to cell junctions in endothelial cells, via acting as a cell junctional complex anchor for AMOTL2 and MAGI1. Acts in concert with KRIT1 and PALS1 to establish and maintain correct endothelial cell polarity and vascular lumen. These effects are mediated by recruitment and activation of the Par polarity complex and RAP1B. Required for activation of PRKCZ and for the localization of phosphorylated PRKCZ, PARD3, TIAM1 and RAP1B to the cell junction. Associates with CTNND1/p120-catenin to control CADH5 endocytosis. The protein is Cadherin-5 of Homo sapiens (Human).